Consider the following 91-residue polypeptide: Transcription factor ILI7 (91 aa).

The region spanning 4 to 58 (RSRSRASSAARITDEQIGDLVSKLQALLPEARLRSNDRVPSARVLQETCSYIRSL) is the bHLH domain.

It belongs to the bHLH protein family.

In terms of biological role, atypical and probable non DNA-binding bHLH transcription factor that integrates multiple signaling pathways to regulate cell elongation and plant development. This is Transcription factor ILI7 (ILI7) from Oryza sativa subsp. indica (Rice).